Consider the following 57-residue polypeptide: MLSWVVTFLVVALIAGILGFGGIAGASIEIAKVIFFIAVVLFLISAVVGLARGRTRV.

The next 2 membrane-spanning stretches (helical) occupy residues 4-24 (WVVT…GGIA) and 30-50 (IAKV…VVGL).

This sequence belongs to the UPF0391 family.

The protein resides in the cell membrane. This is UPF0391 membrane protein RPD_3366 from Rhodopseudomonas palustris (strain BisB5).